Reading from the N-terminus, the 199-residue chain is ATP-dependent Clp protease proteolytic subunit 2 (199 aa).

Ser98 (nucleophile) is an active-site residue. The active site involves His123.

Belongs to the peptidase S14 family. Fourteen ClpP subunits assemble into 2 heptameric rings which stack back to back to give a disk-like structure with a central cavity, resembling the structure of eukaryotic proteasomes.

It localises to the cytoplasm. It carries out the reaction Hydrolysis of proteins to small peptides in the presence of ATP and magnesium. alpha-casein is the usual test substrate. In the absence of ATP, only oligopeptides shorter than five residues are hydrolyzed (such as succinyl-Leu-Tyr-|-NHMec, and Leu-Tyr-Leu-|-Tyr-Trp, in which cleavage of the -Tyr-|-Leu- and -Tyr-|-Trp bonds also occurs).. Functionally, cleaves peptides in various proteins in a process that requires ATP hydrolysis. Has a chymotrypsin-like activity. Plays a major role in the degradation of misfolded proteins. This Corynebacterium efficiens (strain DSM 44549 / YS-314 / AJ 12310 / JCM 11189 / NBRC 100395) protein is ATP-dependent Clp protease proteolytic subunit 2.